We begin with the raw amino-acid sequence, 560 residues long: 2-isopropylmalate synthase (560 aa).

In terms of domain architecture, Pyruvate carboxyltransferase spans 30 to 303; that stretch reads PVWCSVDLRD…DPEIDCSNIE (274 aa). Positions 39, 242, 244, and 278 each coordinate Mg(2+). The regulatory domain stretch occupies residues 437–560; sequence QPEGRLRFVD…RVLDVKAGKA (124 aa).

The protein belongs to the alpha-IPM synthase/homocitrate synthase family. LeuA type 2 subfamily. As to quaternary structure, homodimer. The cofactor is Mg(2+).

Its subcellular location is the cytoplasm. It catalyses the reaction 3-methyl-2-oxobutanoate + acetyl-CoA + H2O = (2S)-2-isopropylmalate + CoA + H(+). It participates in amino-acid biosynthesis; L-leucine biosynthesis; L-leucine from 3-methyl-2-oxobutanoate: step 1/4. Catalyzes the condensation of the acetyl group of acetyl-CoA with 3-methyl-2-oxobutanoate (2-ketoisovalerate) to form 3-carboxy-3-hydroxy-4-methylpentanoate (2-isopropylmalate). The chain is 2-isopropylmalate synthase from Rhizobium johnstonii (strain DSM 114642 / LMG 32736 / 3841) (Rhizobium leguminosarum bv. viciae).